A 113-amino-acid chain; its full sequence is U11-theraphotoxin-Hhn1l (113 aa).

The signal sequence occupies residues 1–21 (MNTGRVTFLVVFLVAVSLGPA). Positions 22–74 (DKEENPMEMQEKTQQGKNYLNFGENLVVPKLEELKAKLVEKESKKSKNSRQKR) are excised as a propeptide. 2 disulfide bridges follow: Cys-82-Cys-95 and Cys-89-Cys-110.

This sequence belongs to the neurotoxin 14 (magi-1) family. 01 (HNTX-16) subfamily. Expressed by the venom gland.

It localises to the secreted. Its function is as follows. Probable ion channel inhibitor. In Cyriopagopus hainanus (Chinese bird spider), this protein is U11-theraphotoxin-Hhn1l.